Reading from the N-terminus, the 545-residue chain is MTTKYIFVTGGVVSSLGKGIAAASLAAVLEARGLKVTMLKLDPYINVDPGTMSPIQHGEVFVTEDGAETDLDLGHYERFIRTKMSRRNNFTTGRVYSDVLRKERRGDYLGATIQVIPHITNAIKERVIAGAEGHDVAIVEIGGTVGDIESLPFLEAIRQLAVDIGRNNALFMHLTLVPYLAAAGEVKTKPTQHSVKELLSIGIQPDILICRSDRAIPANERAKIALFCNVPERAVISLKDVDSIYKIPALLKSQGLDQLVVDRFGLQCGEANLAEWEQVIYQEANPTGEVTIGMVGKYVSLPDAYKSVNEALKHAGLKNRLSINIRYIDSQDLETKGLEVLDGLDAILVPGGFGERGVEGKILAAQYARENKIPYLGICLGMQVALIEFARHVAGMDGAHSSEFKRDTPYPVVGLITEWIDEEGKVEVRTEGSDLGGTMRLGSQLCHLVEGSKVRALYGSDTIQERHRHRYEVNNTLLPKIEAAGLKVTGLSADKKLVEIVENPDHPWFVAVQFHPEFTSTPRDGHPLFEGFIQAAGEYMKRHLN.

The segment at 1 to 266 is amidoligase domain; the sequence is MTTKYIFVTG…DQLVVDRFGL (266 aa). Residue Ser-14 coordinates CTP. Ser-14 contributes to the UTP binding site. ATP-binding positions include 15-20 and Asp-72; that span reads SLGKGI. 2 residues coordinate Mg(2+): Asp-72 and Glu-140. CTP contacts are provided by residues 147-149, 187-192, and Lys-223; these read DIE and KTKPTQ. Residues 187-192 and Lys-223 contribute to the UTP site; that span reads KTKPTQ. 239–241 contacts ATP; it reads KDV. The 252-residue stretch at 291-542 folds into the Glutamine amidotransferase type-1 domain; that stretch reads TIGMVGKYVS…IQAAGEYMKR (252 aa). Gly-352 contributes to the L-glutamine binding site. Catalysis depends on Cys-379, which acts as the Nucleophile; for glutamine hydrolysis. Residues 380–383, Glu-403, and Arg-470 each bind L-glutamine; that span reads LGMQ. Active-site residues include His-515 and Glu-517.

This sequence belongs to the CTP synthase family. Homotetramer.

The enzyme catalyses UTP + L-glutamine + ATP + H2O = CTP + L-glutamate + ADP + phosphate + 2 H(+). It carries out the reaction L-glutamine + H2O = L-glutamate + NH4(+). It catalyses the reaction UTP + NH4(+) + ATP = CTP + ADP + phosphate + 2 H(+). Its pathway is pyrimidine metabolism; CTP biosynthesis via de novo pathway; CTP from UDP: step 2/2. Allosterically activated by GTP, when glutamine is the substrate; GTP has no effect on the reaction when ammonia is the substrate. The allosteric effector GTP functions by stabilizing the protein conformation that binds the tetrahedral intermediate(s) formed during glutamine hydrolysis. Inhibited by the product CTP, via allosteric rather than competitive inhibition. Catalyzes the ATP-dependent amination of UTP to CTP with either L-glutamine or ammonia as the source of nitrogen. Regulates intracellular CTP levels through interactions with the four ribonucleotide triphosphates. The chain is CTP synthase from Tolumonas auensis (strain DSM 9187 / NBRC 110442 / TA 4).